The following is a 382-amino-acid chain: Queuine tRNA-ribosyltransferase (382 aa).

Asp-96 (proton acceptor) is an active-site residue. Substrate is bound by residues 96–100 (DSGGF), Asp-151, Gln-194, and Gly-221. The segment at 252–258 (GVGAPDS) is RNA binding. Asp-271 serves as the catalytic Nucleophile. The tract at residues 276-280 (TRIAR) is RNA binding; important for wobble base 34 recognition. Zn(2+) contacts are provided by Cys-309, Cys-311, Cys-314, and His-340.

The protein belongs to the queuine tRNA-ribosyltransferase family. As to quaternary structure, homodimer. Within each dimer, one monomer is responsible for RNA recognition and catalysis, while the other monomer binds to the replacement base PreQ1. It depends on Zn(2+) as a cofactor.

The catalysed reaction is 7-aminomethyl-7-carbaguanine + guanosine(34) in tRNA = 7-aminomethyl-7-carbaguanosine(34) in tRNA + guanine. Its pathway is tRNA modification; tRNA-queuosine biosynthesis. In terms of biological role, catalyzes the base-exchange of a guanine (G) residue with the queuine precursor 7-aminomethyl-7-deazaguanine (PreQ1) at position 34 (anticodon wobble position) in tRNAs with GU(N) anticodons (tRNA-Asp, -Asn, -His and -Tyr). Catalysis occurs through a double-displacement mechanism. The nucleophile active site attacks the C1' of nucleotide 34 to detach the guanine base from the RNA, forming a covalent enzyme-RNA intermediate. The proton acceptor active site deprotonates the incoming PreQ1, allowing a nucleophilic attack on the C1' of the ribose to form the product. After dissociation, two additional enzymatic reactions on the tRNA convert PreQ1 to queuine (Q), resulting in the hypermodified nucleoside queuosine (7-(((4,5-cis-dihydroxy-2-cyclopenten-1-yl)amino)methyl)-7-deazaguanosine). The protein is Queuine tRNA-ribosyltransferase of Lactococcus lactis subsp. cremoris (strain SK11).